A 314-amino-acid chain; its full sequence is Olfactory receptor 10T2 (314 aa).

Residues 1-26 (MRGFNKTTVVTQFILVGFSSLGELQL) are Extracellular-facing. Asn5 is a glycosylation site (N-linked (GlcNAc...) asparagine). Residues 27-47 (LLFVIFLLLYLTILVANVTIM) traverse the membrane as a helical segment. Residues 48 to 55 (AVIRFSWT) are Cytoplasmic-facing. A helical transmembrane segment spans residues 56-76 (LHTPMYGFLFILSFSESCYTF). Topologically, residues 77-100 (VIIPQLLVHLLSDTKTISFMACAT) are extracellular. Cys98 and Cys190 form a disulfide bridge. The chain crosses the membrane as a helical span at residues 101–121 (QLFFFLGFACTNCLLIAVMGY). The Cytoplasmic segment spans residues 122–140 (DRYVAICHPLRYTLIINKR). The helical transmembrane segment at 141–161 (LGLELISLSGATGFFIALVAT) threads the bilayer. Residues 162 to 198 (NLICDMRFCGPNRVNHYFCDMAPVIKLACTDTHVKEL) are Extracellular-facing. Residues 199 to 218 (ALFSLSILVIMVPFLLILIS) form a helical membrane-spanning segment. Topologically, residues 219 to 237 (YGFIVNTILKIPSAEGKKA) are cytoplasmic. Residues 238 to 258 (FVTCASHLTVVFVHYGCASII) traverse the membrane as a helical segment. At 259–271 (YLRPKSKSASDKD) the chain is on the extracellular side. A helical membrane pass occupies residues 272–292 (QLVAVTYTVVTPLLNPLVYSL). Topologically, residues 293-314 (RNKEVKTALKRVLGMPVATKMS) are cytoplasmic.

Belongs to the G-protein coupled receptor 1 family.

The protein resides in the cell membrane. In terms of biological role, odorant receptor. The chain is Olfactory receptor 10T2 (OR10T2) from Homo sapiens (Human).